A 185-amino-acid polypeptide reads, in one-letter code: Ribosome-recycling factor (185 aa).

This sequence belongs to the RRF family.

The protein resides in the cytoplasm. Its function is as follows. Responsible for the release of ribosomes from messenger RNA at the termination of protein biosynthesis. May increase the efficiency of translation by recycling ribosomes from one round of translation to another. The sequence is that of Ribosome-recycling factor from Streptococcus equi subsp. equi (strain 4047).